The following is a 324-amino-acid chain: Phospho-N-acetylmuramoyl-pentapeptide-transferase (324 aa).

10 helical membrane passes run 5-25, 50-70, 77-97, 117-137, 147-167, 176-196, 203-223, 227-247, 250-270, and 304-324; these read VMVL…PLFI, GTPT…TLLM, LSVE…LGFL, LIGQ…SGFS, LSIN…VGGS, LDGL…VLAW, IAIF…FNAH, VFMG…VAIL, LEIL…SVII, and VTFW…EVWI.

This sequence belongs to the glycosyltransferase 4 family. MraY subfamily. Mg(2+) serves as cofactor.

The protein localises to the cell membrane. It catalyses the reaction UDP-N-acetyl-alpha-D-muramoyl-L-alanyl-gamma-D-glutamyl-meso-2,6-diaminopimeloyl-D-alanyl-D-alanine + di-trans,octa-cis-undecaprenyl phosphate = di-trans,octa-cis-undecaprenyl diphospho-N-acetyl-alpha-D-muramoyl-L-alanyl-D-glutamyl-meso-2,6-diaminopimeloyl-D-alanyl-D-alanine + UMP. It participates in cell wall biogenesis; peptidoglycan biosynthesis. In terms of biological role, catalyzes the initial step of the lipid cycle reactions in the biosynthesis of the cell wall peptidoglycan: transfers peptidoglycan precursor phospho-MurNAc-pentapeptide from UDP-MurNAc-pentapeptide onto the lipid carrier undecaprenyl phosphate, yielding undecaprenyl-pyrophosphoryl-MurNAc-pentapeptide, known as lipid I. The chain is Phospho-N-acetylmuramoyl-pentapeptide-transferase from Geobacillus sp. (strain WCH70).